The primary structure comprises 171 residues: Large ribosomal subunit protein uL5 (171 aa).

This sequence belongs to the universal ribosomal protein uL5 family. Part of the 50S ribosomal subunit; contacts the 5S rRNA and probably tRNA. Forms a bridge to the 30S subunit in the 70S ribosome.

This is one of the proteins that bind and probably mediate the attachment of the 5S RNA into the large ribosomal subunit, where it forms part of the central protuberance. In the 70S ribosome it contacts protein S13 of the 30S subunit (bridge B1b), connecting the 2 subunits; this bridge is implicated in subunit movement. May contact the P site tRNA; the 5S rRNA and some of its associated proteins might help stabilize positioning of ribosome-bound tRNAs. The protein is Large ribosomal subunit protein uL5 of Methanocorpusculum labreanum (strain ATCC 43576 / DSM 4855 / Z).